Here is a 95-residue protein sequence, read N- to C-terminus: UPF0358 protein BT9727_3692 (95 aa).

The protein belongs to the UPF0358 family.

The polypeptide is UPF0358 protein BT9727_3692 (Bacillus thuringiensis subsp. konkukian (strain 97-27)).